A 511-amino-acid chain; its full sequence is Zinc finger and BTB domain-containing protein 45 (511 aa).

The BTB domain maps to 33 to 96 (CDVTVRIREA…LYSGSLVVAQ (64 aa)). The segment covering 159 to 168 (ARPPGHPGAA) has biased composition (low complexity). Disordered stretches follow at residues 159-241 (ARPP…PDCA) and 294-403 (EDGA…PPTY). Positions 206 to 224 (RGDEDDEESDDETDGEDGE) are enriched in acidic residues. Pro residues predominate over residues 339–360 (PGPPAPPPSAPSGPAPAPPPAF). The span at 378 to 397 (PAPSAAPTTAPSGTPARTPG) shows a compositional bias: low complexity. C2H2-type zinc fingers lie at residues 403-425 (YECSHCRKTFSSRKNYTKHMFIH), 431-453 (HQCAVCWRSFSLRDYLLKHMVTH), 459-481 (FQCAVCAKRFTQKSSLNVHMRTH), and 486-508 (APCPACGKVFSHRALLERHLAAH).

It belongs to the krueppel C2H2-type zinc-finger protein family.

It localises to the nucleus. In terms of biological role, may be involved in transcriptional regulation. In the central nervous system, may play a role in glial cell differentiation. The chain is Zinc finger and BTB domain-containing protein 45 (ZBTB45) from Homo sapiens (Human).